A 121-amino-acid chain; its full sequence is Protein GAT4 (121 aa).

The disordered stretch occupies residues 29-48 (EAQHGLPRNADSQPARPRTG). The GATA-type zinc finger occupies 53–79 (CGQCGEIKTSLQWREGPNGAACLCNAC).

This chain is Protein GAT4 (GAT4), found in Saccharomyces cerevisiae (strain ATCC 204508 / S288c) (Baker's yeast).